Consider the following 284-residue polypeptide: tRNA N(3)-cytidine methyltransferase METTL6 (284 aa).

Residues W45 and Y49 each contribute to the S-adenosyl-L-methionine site. Residues Y49, H61, E85, G87, D110, D136, L137, and I157 each contribute to the S-adenosyl-L-homocysteine site. S-adenosyl-L-methionine-binding residues include G87, D110, D136, L137, and I157.

The protein belongs to the methyltransferase superfamily. METL family. In terms of assembly, monomer. Interacts with SARS1/SerRS; interaction is mediated via tRNA(Ser) and is required for N(3)-methylcytidine methylation.

The protein localises to the cytoplasm. Its subcellular location is the nucleus. It carries out the reaction cytidine(32) in tRNA(Ser) + S-adenosyl-L-methionine = N(3)-methylcytidine(32) in tRNA(Ser) + S-adenosyl-L-homocysteine + H(+). S-adenosyl-L-methionine-dependent methyltransferase that mediates N(3)-methylcytidine modification of residue 32 of the tRNA anticodon loop of tRNA(Ser), including tRNA(Ser)(UGA) and tRNA(Ser)(GCU). Interaction with SARS1/SerRS is required for N(3)-methylcytidine methylation. This chain is tRNA N(3)-cytidine methyltransferase METTL6, found in Homo sapiens (Human).